Here is a 996-residue protein sequence, read N- to C-terminus: Cilia- and flagella-associated protein 251 (996 aa).

WD repeat units lie at residues 73–114 (GHCN…PKKT), 118–164 (PHPN…EPCL), 168–211 (EFDR…KGFN), 219–258 (PSLK…EKVD), 282–319 (KGSN…IAWF), 399–438 (SIVS…SVLS), 445–485 (TDKE…WQNS), 494–533 (QGKP…FDVN), 547–593 (IHHS…YSKQ), 615–658 (EQET…FKFC), and 719–759 (AHPD…LEQI). The disordered stretch occupies residues 971 to 996 (DLEGEERDDNIEDQYEDEENEEYDQD).

The protein localises to the cell projection. The protein resides in the cilium. Functionally, as component of a spoke-associated complex, regulates ciliary mobility by mediating a stable and functional assembly of the radial spoke 3 (RS3). The protein is Cilia- and flagella-associated protein 251 of Tetrahymena thermophila (strain SB210).